The sequence spans 350 residues: Quinolinate phosphoribosyltransferase [decarboxylating] 1 (350 aa).

Substrate is bound by residues Arg141, 172-174 (TRK), Arg196, Lys206, Glu239, Asp266, 298-300 (SGN), and 319-321 (SGA).

It belongs to the NadC/ModD family.

The catalysed reaction is nicotinate beta-D-ribonucleotide + CO2 + diphosphate = quinolinate + 5-phospho-alpha-D-ribose 1-diphosphate + 2 H(+). Its pathway is alkaloid biosynthesis; nicotine biosynthesis. The protein operates within cofactor biosynthesis; NAD(+) biosynthesis; nicotinate D-ribonucleotide from quinolinate: step 1/1. Involved in the biosynthesis of pyridine alkaloid natural products, leading mainly to the production of anabasine, anatabine, nicotine and nornicotine, effective deterrents against herbivores with antiparasitic and pesticide properties (neurotoxins); nornicotine serves as the precursor in the synthesis of the carcinogen compound N'-nitrosonornicotine (NNN). Involved in the catabolism of quinolinic acid (QA). The chain is Quinolinate phosphoribosyltransferase [decarboxylating] 1 from Nicotiana glauca (Glaucous tobacco).